Reading from the N-terminus, the 442-residue chain is 3-phosphoshikimate 1-carboxyvinyltransferase (442 aa).

Lysine 25, serine 26, and arginine 30 together coordinate 3-phosphoshikimate. Lysine 25 lines the phosphoenolpyruvate pocket. Residues glycine 97 and arginine 125 each contribute to the phosphoenolpyruvate site. The 3-phosphoshikimate site is built by serine 170, serine 171, glutamine 172, aspartate 323, and lysine 350. Residue glutamine 172 participates in phosphoenolpyruvate binding. Aspartate 323 serves as the catalytic Proton acceptor. Phosphoenolpyruvate is bound by residues arginine 354 and arginine 399.

This sequence belongs to the EPSP synthase family. In terms of assembly, monomer.

Its subcellular location is the cytoplasm. The enzyme catalyses 3-phosphoshikimate + phosphoenolpyruvate = 5-O-(1-carboxyvinyl)-3-phosphoshikimate + phosphate. It participates in metabolic intermediate biosynthesis; chorismate biosynthesis; chorismate from D-erythrose 4-phosphate and phosphoenolpyruvate: step 6/7. Functionally, catalyzes the transfer of the enolpyruvyl moiety of phosphoenolpyruvate (PEP) to the 5-hydroxyl of shikimate-3-phosphate (S3P) to produce enolpyruvyl shikimate-3-phosphate and inorganic phosphate. This Bartonella tribocorum (strain CIP 105476 / IBS 506) protein is 3-phosphoshikimate 1-carboxyvinyltransferase.